We begin with the raw amino-acid sequence, 35 residues long: Photosystem II reaction center protein T (35 aa).

A helical transmembrane segment spans residues 3–23 (ALVYTFLLVSTLGIIFFAIFF).

Belongs to the PsbT family. In terms of assembly, PSII is composed of 1 copy each of membrane proteins PsbA, PsbB, PsbC, PsbD, PsbE, PsbF, PsbH, PsbI, PsbJ, PsbK, PsbL, PsbM, PsbT, PsbY, PsbZ, Psb30/Ycf12, at least 3 peripheral proteins of the oxygen-evolving complex and a large number of cofactors. It forms dimeric complexes.

It is found in the plastid. Its subcellular location is the chloroplast thylakoid membrane. Its function is as follows. Found at the monomer-monomer interface of the photosystem II (PS II) dimer, plays a role in assembly and dimerization of PSII. PSII is a light-driven water plastoquinone oxidoreductase, using light energy to abstract electrons from H(2)O, generating a proton gradient subsequently used for ATP formation. The protein is Photosystem II reaction center protein T of Gunnera chilensis (Chilean rhubarb).